The primary structure comprises 474 residues: Aspartyl/glutamyl-tRNA(Asn/Gln) amidotransferase subunit B (474 aa).

The protein belongs to the GatB/GatE family. GatB subfamily. Heterotrimer of A, B and C subunits.

It carries out the reaction L-glutamyl-tRNA(Gln) + L-glutamine + ATP + H2O = L-glutaminyl-tRNA(Gln) + L-glutamate + ADP + phosphate + H(+). It catalyses the reaction L-aspartyl-tRNA(Asn) + L-glutamine + ATP + H2O = L-asparaginyl-tRNA(Asn) + L-glutamate + ADP + phosphate + 2 H(+). In terms of biological role, allows the formation of correctly charged Asn-tRNA(Asn) or Gln-tRNA(Gln) through the transamidation of misacylated Asp-tRNA(Asn) or Glu-tRNA(Gln) in organisms which lack either or both of asparaginyl-tRNA or glutaminyl-tRNA synthetases. The reaction takes place in the presence of glutamine and ATP through an activated phospho-Asp-tRNA(Asn) or phospho-Glu-tRNA(Gln). The polypeptide is Aspartyl/glutamyl-tRNA(Asn/Gln) amidotransferase subunit B (Wolbachia pipientis wMel).